The sequence spans 79 residues: Acyl carrier protein (79 aa).

Residues 2 to 77 (ENIEQRVKKI…QAIDYVTAHL (76 aa)) enclose the Carrier domain. O-(pantetheine 4'-phosphoryl)serine is present on Ser37.

It belongs to the acyl carrier protein (ACP) family. Post-translationally, 4'-phosphopantetheine is transferred from CoA to a specific serine of apo-ACP by AcpS. This modification is essential for activity because fatty acids are bound in thioester linkage to the sulfhydryl of the prosthetic group.

It localises to the cytoplasm. It functions in the pathway lipid metabolism; fatty acid biosynthesis. Functionally, carrier of the growing fatty acid chain in fatty acid biosynthesis. This is Acyl carrier protein from Aromatoleum aromaticum (strain DSM 19018 / LMG 30748 / EbN1) (Azoarcus sp. (strain EbN1)).